The sequence spans 185 residues: Elongation factor P (185 aa).

The protein belongs to the elongation factor P family.

It localises to the cytoplasm. It participates in protein biosynthesis; polypeptide chain elongation. Functionally, involved in peptide bond synthesis. Stimulates efficient translation and peptide-bond synthesis on native or reconstituted 70S ribosomes in vitro. Probably functions indirectly by altering the affinity of the ribosome for aminoacyl-tRNA, thus increasing their reactivity as acceptors for peptidyl transferase. The polypeptide is Elongation factor P (Streptococcus pyogenes serotype M5 (strain Manfredo)).